The chain runs to 202 residues: CASP-like protein 2U7 (202 aa).

Topologically, residues methionine 1–alanine 10 are cytoplasmic. The helical transmembrane segment at leucine 11 to leucine 31 threads the bilayer. Residues asparagine 32–lysine 64 lie on the Extracellular side of the membrane. Residues phenylalanine 65–methionine 85 form a helical membrane-spanning segment. Over alanine 86 to methionine 101 the chain is Cytoplasmic. The chain crosses the membrane as a helical span at residues alanine 102 to valine 122. The Extracellular portion of the chain corresponds to serine 123 to cysteine 148. The helical transmembrane segment at leucine 149–alanine 169 threads the bilayer. Over serine 170–proline 202 the chain is Cytoplasmic.

The protein belongs to the Casparian strip membrane proteins (CASP) family. Homodimer and heterodimers.

It is found in the cell membrane. The polypeptide is CASP-like protein 2U7 (Selaginella moellendorffii (Spikemoss)).